The sequence spans 443 residues: Protein IQ-DOMAIN 11 (443 aa).

The calmodulin-binding stretch occupies residues 5–20; it reads KGLFTVLKRIFISEVN. Short sequence motifs (nuclear localization signal) lie at residues 11–18 and 27–34; these read LKRIFISE and RRKWTFWK. A disordered region spans residues 44 to 65; that stretch reads ITAPPEHRTSHESHEEQKEEIV. A compositionally biased stretch (basic and acidic residues) spans 48–64; sequence PEHRTSHESHEEQKEEI. IQ domains follow at residues 113–138 and 139–161; these read AATR…GIVK and LQAY…CLQS. The segment covering 277–293 has biased composition (basic and acidic residues); it reads FSSKTKPKDETLNEKQL. The disordered stretch occupies residues 277–361; sequence FSSKTKPKDE…PRSFDTQSES (85 aa).

It belongs to the IQD family. Binds to multiple calmodulin (CaM) in the presence of Ca(2+) and CaM-like proteins. As to expression, expressed in hypocotyls, cotyledons, leaves and petioles.

Its subcellular location is the nucleus. The protein localises to the cytoplasm. It localises to the cytoskeleton. May be involved in cooperative interactions with calmodulins or calmodulin-like proteins. Recruits calmodulin proteins to microtubules, thus being a potential scaffold in cellular signaling and trafficking. Regulates cell shape and elongation in aerial organs (i.e. epidermis pavement cells) probably by regulating cortical microtubules (MT) arrays orientation. May associate with nucleic acids and regulate gene expression at the transcriptional or post-transcriptional level. The chain is Protein IQ-DOMAIN 11 from Arabidopsis thaliana (Mouse-ear cress).